The chain runs to 446 residues: Na(+)-translocating NADH-quinone reductase subunit A (446 aa).

This sequence belongs to the NqrA family. In terms of assembly, composed of six subunits; NqrA, NqrB, NqrC, NqrD, NqrE and NqrF.

It carries out the reaction a ubiquinone + n Na(+)(in) + NADH + H(+) = a ubiquinol + n Na(+)(out) + NAD(+). Its function is as follows. NQR complex catalyzes the reduction of ubiquinone-1 to ubiquinol by two successive reactions, coupled with the transport of Na(+) ions from the cytoplasm to the periplasm. NqrA to NqrE are probably involved in the second step, the conversion of ubisemiquinone to ubiquinol. The chain is Na(+)-translocating NADH-quinone reductase subunit A from Vibrio parahaemolyticus serotype O3:K6 (strain RIMD 2210633).